A 338-amino-acid chain; its full sequence is Lipoate-protein ligase A (338 aa).

The BPL/LPL catalytic domain occupies 29-216 (PATQRVLFLW…AFFAHYGERV (188 aa)). ATP-binding positions include R71, 76-79 (GAVF), and K134. K134 is a binding site for (R)-lipoate.

This sequence belongs to the LplA family. Monomer.

It is found in the cytoplasm. It carries out the reaction L-lysyl-[lipoyl-carrier protein] + (R)-lipoate + ATP = N(6)-[(R)-lipoyl]-L-lysyl-[lipoyl-carrier protein] + AMP + diphosphate + H(+). The protein operates within protein modification; protein lipoylation via exogenous pathway; protein N(6)-(lipoyl)lysine from lipoate: step 1/2. It functions in the pathway protein modification; protein lipoylation via exogenous pathway; protein N(6)-(lipoyl)lysine from lipoate: step 2/2. Catalyzes both the ATP-dependent activation of exogenously supplied lipoate to lipoyl-AMP and the transfer of the activated lipoyl onto the lipoyl domains of lipoate-dependent enzymes. In Escherichia coli O6:K15:H31 (strain 536 / UPEC), this protein is Lipoate-protein ligase A.